Consider the following 386-residue polypeptide: Succinate--CoA ligase [ADP-forming] subunit beta (386 aa).

An ATP-grasp domain is found at 9–244 (KELLRKYGVV…FDEEDADEIE (236 aa)). ATP is bound by residues Lys-46, 53–55 (GRG), Glu-99, Ala-102, and Glu-107. Asn-199 and Asp-213 together coordinate Mg(2+). Substrate is bound by residues Asn-264 and 321–323 (GIM).

It belongs to the succinate/malate CoA ligase beta subunit family. In terms of assembly, heterotetramer of two alpha and two beta subunits. Requires Mg(2+) as cofactor.

The catalysed reaction is succinate + ATP + CoA = succinyl-CoA + ADP + phosphate. It carries out the reaction GTP + succinate + CoA = succinyl-CoA + GDP + phosphate. It functions in the pathway carbohydrate metabolism; tricarboxylic acid cycle; succinate from succinyl-CoA (ligase route): step 1/1. In terms of biological role, succinyl-CoA synthetase functions in the citric acid cycle (TCA), coupling the hydrolysis of succinyl-CoA to the synthesis of either ATP or GTP and thus represents the only step of substrate-level phosphorylation in the TCA. The beta subunit provides nucleotide specificity of the enzyme and binds the substrate succinate, while the binding sites for coenzyme A and phosphate are found in the alpha subunit. The polypeptide is Succinate--CoA ligase [ADP-forming] subunit beta (Aromatoleum aromaticum (strain DSM 19018 / LMG 30748 / EbN1) (Azoarcus sp. (strain EbN1))).